Here is a 261-residue protein sequence, read N- to C-terminus: Insulin-like growth factor-binding protein-related protein 1 (261 aa).

Positions 1–17 (MWIPLLLVALVVPAIRC) are cleaved as a signal peptide. The 84-residue stretch at 18 to 101 (ERKCGECNPE…DPPEAMCVCL (84 aa)) folds into the IGFBP N-terminal domain. Disulfide bonds link cysteine 21–cysteine 45, cysteine 24–cysteine 47, cysteine 29–cysteine 48, cysteine 36–cysteine 51, cysteine 59–cysteine 82, cysteine 76–cysteine 98, cysteine 100–cysteine 118, and cysteine 107–cysteine 139. The Kazal-like domain occupies 70–141 (NRGHGPCGEY…RAMHRGPCKS (72 aa)). Residues 143-243 (PKITSPPEEA…GESSAAARVV (101 aa)) form the Ig-like C2-type domain. N-linked (GlcNAc...) asparagine glycosylation is present at asparagine 154. Cysteine 164 and cysteine 227 are joined by a disulfide.

Expressed by the venom gland.

It is found in the secreted. This Cupiennius salei (American wandering spider) protein is Insulin-like growth factor-binding protein-related protein 1.